The chain runs to 352 residues: Forkhead box protein D5 (352 aa).

Disordered regions lie at residues 1–32 (MSLS…LGED) and 47–92 (HSEM…GKAK). Residues 20–32 (SDEEDEIDILGED) show a composition bias toward acidic residues. Positions 73–82 (ESEGGTSKDS) are enriched in low complexity. The fork-head DNA-binding region spans 97-191 (KPPYSYIALI…DNGSFLRRRK (95 aa)).

As to expression, expression begins in the newly forming dorsal mesoderm and is maintained during gastrulation at the dorsal blastopore lip (Spemann organizer). At the early neurula stages, expressed in a row of cells along the dorsal midline that are destined to become the fllor plate of the neural tube. At late neurula, expressed within the anterior and posterior poles of the embryo. After neural closure, expression is detected only in the tailtip, the otic vesicle and at the midbrain/hindbrain boundary.

Its subcellular location is the nucleus. In terms of biological role, transcriptional repressor. The sequence is that of Forkhead box protein D5 from Xenopus tropicalis (Western clawed frog).